We begin with the raw amino-acid sequence, 518 residues long: 3-octaprenyl-4-hydroxybenzoate carboxy-lyase (518 aa).

Asn177 serves as a coordination point for Mn(2+). Prenylated FMN contacts are provided by residues 180 to 182, 194 to 196, and 199 to 200; these read IYR, RWL, and RG. Position 243 (Glu243) interacts with Mn(2+). The active-site Proton donor is Asp318.

The protein belongs to the UbiD family. Homohexamer. Prenylated FMN serves as cofactor. It depends on Mn(2+) as a cofactor.

The protein localises to the cell membrane. It carries out the reaction a 4-hydroxy-3-(all-trans-polyprenyl)benzoate + H(+) = a 2-(all-trans-polyprenyl)phenol + CO2. Its pathway is cofactor biosynthesis; ubiquinone biosynthesis. Functionally, catalyzes the decarboxylation of 3-octaprenyl-4-hydroxy benzoate to 2-octaprenylphenol, an intermediate step in ubiquinone biosynthesis. The sequence is that of 3-octaprenyl-4-hydroxybenzoate carboxy-lyase from Burkholderia orbicola (strain AU 1054).